Reading from the N-terminus, the 859-residue chain is Suppressor protein MPT5 (859 aa).

The interval 85–108 (MNNTSTSNSANSFSPNPNAASNST) is disordered. Residues 86 to 108 (NNTSTSNSANSFSPNPNAASNST) show a composition bias toward low complexity. Positions 188–596 (DNSSFGLSSS…KIKLKVKAYA (409 aa)) constitute a PUM-HD domain. Pumilio repeat units lie at residues 209 to 247 (PLRDLDYIKLATDQFGCRFLQKKLETPSESNMVRDLMYE), 248 to 283 (QIKPFFLDLILDPFGNYLVQKLCDYLTAEQKTLLIQ), 284 to 320 (TIYPNVFQISINQYGTRSLQKIIDTVDNEVQIDLIIK), 325 to 362 (EFTSIEQVVTLINDLNGNHVIQKCIFKFSPSKFGFIID), 363 to 400 (AIVEQNNIITISTHKHGCCVLQKLLSVCTLQQIFKISV), 401 to 438 (KIVQFLPGLINDQFGNYIIQFLLDIKELDFYLLAELFN), 439 to 474 (RLSNELCQLSCLKFSSNVVEKFIKKLFRIITGFIVN), and 503 to 539 (DIFTVNLNVLIRDNFGNYALQTLLDVKNYSPLLAYNK). Positions 620–658 (TINNENKNPHNKNSHNHNHNHNHNHAHNNNNNNNQKSHT) are disordered. Residues 628-645 (PHNKNSHNHNHNHNHNHA) are compositionally biased toward basic residues. Phosphoserine is present on residues Ser662, Ser834, and Ser838.

It localises to the cytoplasm. Functionally, RNA-binding protein involved in post-transcriptional regulation. Negatively regulates expression of HO by binding to the 3'-UTR of HO mRNA. Predominantly binds to mRNAs encoding chromatin modifiers and spindle pole body components. Recognizes and binds to 5'-TGTAA[CT]A[AT]TA-3' in the 3'-UTR of target mRNAs. Multicopy suppressor of POP2 mutation. Required for high temperature growth. In Saccharomyces cerevisiae (strain ATCC 204508 / S288c) (Baker's yeast), this protein is Suppressor protein MPT5 (MPT5).